Here is a 762-residue protein sequence, read N- to C-terminus: Cellulose synthase-like protein H2 (762 aa).

Positions 1-15 are enriched in low complexity; the sequence is MAVVAAAAATGSTTR. Residues 1-39 form a disordered region; that stretch reads MAVVAAAAATGSTTRSGGGGGEGTRSGRKKPPPPPLQER. 2 helical membrane passes run 47–67 and 81–101; these read AWAW…LLAL and GVWR…ALNV. Catalysis depends on residues Asp180 and Asp470. Helical transmembrane passes span 541-561, 582-602, 619-639, 673-693, 708-728, and 739-759; these read LAYL…CYGL, FSVP…EYMA, IISV…SLGL, LPVF…VTVG, APGI…FPFV, and GIPW…VTFC.

This sequence belongs to the glycosyltransferase 2 family. Plant cellulose synthase-like H subfamily.

The protein localises to the golgi apparatus membrane. Thought to be a Golgi-localized beta-glycan synthase that polymerize the backbones of noncellulosic polysaccharides (hemicelluloses) of plant cell wall. In Oryza sativa subsp. japonica (Rice), this protein is Cellulose synthase-like protein H2 (CSLH2).